Reading from the N-terminus, the 104-residue chain is MIRKAFVMQVNADAHEEYQRRHNPIWPELEAVLKSHGAHHYAIYLDQERNLLFATVEIESEERWNAVASTDVCQRWWKHMRDVMPANPDNSPVSAELKEVFYLQ.

Y18 is a binding site for substrate. H22 acts as the Proton donor in catalysis. Residues Y41 and 76 to 77 (WW) each bind substrate.

This sequence belongs to the rhamnose mutarotase family. In terms of assembly, homodimer.

It localises to the cytoplasm. It catalyses the reaction alpha-L-rhamnose = beta-L-rhamnose. It functions in the pathway carbohydrate metabolism; L-rhamnose metabolism. Its function is as follows. Involved in the anomeric conversion of L-rhamnose. The sequence is that of L-rhamnose mutarotase from Salmonella agona (strain SL483).